Reading from the N-terminus, the 108-residue chain is Small ribosomal subunit protein bS16 (108 aa).

A disordered region spans residues 82–108; that stretch reads ESKFSKNTQTENKKPVSKKTTKKSKDN. Over residues 96 to 108 the composition is skewed to basic residues; that stretch reads PVSKKTTKKSKDN.

It belongs to the bacterial ribosomal protein bS16 family.

The sequence is that of Small ribosomal subunit protein bS16 from Mycoplasma mycoides subsp. mycoides SC (strain CCUG 32753 / NCTC 10114 / PG1).